The primary structure comprises 351 residues: LETM1 domain-containing protein 1 (351 aa).

Residues 1–130 (MLSGMALCRT…FRRDIIKAAP (130 aa)) are Cytoplasmic-facing. A helical membrane pass occupies residues 131-151 (VVIISIPPFANYLVFVLMYFF). The Mitochondrial intermembrane segment spans residues 152–351 (PRQLLIRHFW…SANYLQSIKQ (200 aa)). The Letm1 RBD domain occupies 172–351 (IYHRMRVEAY…SANYLQSIKQ (180 aa)).

The protein localises to the mitochondrion outer membrane. It is found in the nucleus. It localises to the mitochondrion inner membrane. In terms of biological role, may play an essential role for mitochondrial structure and function. The sequence is that of LETM1 domain-containing protein 1 from Xenopus tropicalis (Western clawed frog).